Here is a 587-residue protein sequence, read N- to C-terminus: Heavy metal-associated isoprenylated plant protein 33 (587 aa).

The HMA domain occupies 9-72 (IQTCVLKVNI…KLLKSGKHAE (64 aa)). A metal cation contacts are provided by Cys20 and Cys23. Disordered stretches follow at residues 98–146 (QIDH…MVIP), 176–261 (LKLP…KPMM), 287–449 (AHKN…PMSN), 462–504 (PGGG…QQQQ), and 532–587 (YARP…CNIM). Gly residues-rich tracts occupy residues 104–113 (KGGGGGGGGP) and 121–140 (KIGG…GGGP). The span at 194–208 (PMNKNPQMPNNPNQK) shows a compositional bias: low complexity. Acidic residues predominate over residues 215-248 (PDDDDEEDFSDEFDDEFDEDDDEFDDDLEDDEFD). 3 stretches are compositionally biased toward gly residues: residues 290–300 (NGGGPGPAGGK), 312–419 (MGGG…GGGP), and 428–445 (GAMG…GGPG). Low complexity predominate over residues 471-483 (SAEAPPGYFQGQV). 2 stretches are compositionally biased toward pro residues: residues 534-547 (RPPP…PQPQ) and 554-565 (YPYPYPYPPQYP). Residues 578–587 (DENTSSCNIM) are compositionally biased toward polar residues. A Cysteine methyl ester modification is found at Cys584. Cys584 is lipidated: S-farnesyl cysteine. The propeptide at 585 to 587 (NIM) is removed in mature form.

It belongs to the HIPP family.

Functionally, heavy-metal-binding protein. The sequence is that of Heavy metal-associated isoprenylated plant protein 33 from Arabidopsis thaliana (Mouse-ear cress).